The sequence spans 95 residues: L-amino-acid oxidase (95 aa).

Belongs to the flavin monoamine oxidase family. FIG1 subfamily. Homodimer; non-covalently linked. Requires FAD as cofactor. Post-translationally, N-glycosylated. In terms of tissue distribution, expressed by the venom gland.

It is found in the secreted. The enzyme catalyses an L-alpha-amino acid + O2 + H2O = a 2-oxocarboxylate + H2O2 + NH4(+). The catalysed reaction is L-leucine + O2 + H2O = 4-methyl-2-oxopentanoate + H2O2 + NH4(+). It carries out the reaction L-phenylalanine + O2 + H2O = 3-phenylpyruvate + H2O2 + NH4(+). It catalyses the reaction L-tryptophan + O2 + H2O = indole-3-pyruvate + H2O2 + NH4(+). The enzyme catalyses L-methionine + O2 + H2O = 4-methylsulfanyl-2-oxobutanoate + H2O2 + NH4(+). The catalysed reaction is L-arginine + O2 + H2O = 5-guanidino-2-oxopentanoate + H2O2 + NH4(+). Functionally, catalyzes an oxidative deamination of predominantly hydrophobic and aromatic L-amino acids, thus producing hydrogen peroxide that may contribute to the diverse toxic effects of this enzyme. Is highly active on L-Met, L-Leu, L-Phe, L-Trp, and L-Arg, and no weakly or no active on L-His, L-Tyr, L-Ile, L-Gln, and L-Lys. Exhibits diverse biological activities, such as antibacterial activity against both Gram-positive (B.subtilis) and Gram-negative (E.coli) bacteria, and inhibition of ADP- or collagen-induced platelet aggregation. Effects of snake L-amino oxidases on platelets are controversial, since they either induce aggregation or inhibit agonist-induced aggregation. These different effects are probably due to different experimental conditions. This protein may also induce hemorrhage, hemolysis, edema, apoptosis, and have antiparasitic activities. The polypeptide is L-amino-acid oxidase (Naja oxiana (Central Asian cobra)).